Here is a 150-residue protein sequence, read N- to C-terminus: 3-hydroxyacyl-[acyl-carrier-protein] dehydratase FabZ (150 aa).

Residue H54 is part of the active site.

This sequence belongs to the thioester dehydratase family. FabZ subfamily.

The protein localises to the cytoplasm. The enzyme catalyses a (3R)-hydroxyacyl-[ACP] = a (2E)-enoyl-[ACP] + H2O. In terms of biological role, involved in unsaturated fatty acids biosynthesis. Catalyzes the dehydration of short chain beta-hydroxyacyl-ACPs and long chain saturated and unsaturated beta-hydroxyacyl-ACPs. The sequence is that of 3-hydroxyacyl-[acyl-carrier-protein] dehydratase FabZ from Psychromonas ingrahamii (strain DSM 17664 / CCUG 51855 / 37).